A 238-amino-acid polypeptide reads, in one-letter code: uncharacterized protein (238 aa).

Disordered stretches follow at residues 1–51 and 214–238; these read MPCT…ASCA and ITVE…FPTA. The segment covering 16-31 has biased composition (low complexity); sequence ATWRTARPAPRRCGSC.

This is an uncharacterized protein from Streptomyces griseus.